Consider the following 517-residue polypeptide: Beta-glucosidase 17 (517 aa).

An N-terminal signal peptide occupies residues methionine 1–alanine 23. Residues glutamine 54, histidine 158, and asparagine 203–glutamate 204 each bind a beta-D-glucoside. Glutamate 204 functions as the Proton donor in the catalytic mechanism. Residues cysteine 223 and cysteine 230 are joined by a disulfide bond. Residue asparagine 229 is glycosylated (N-linked (GlcNAc...) asparagine). Tyrosine 346 provides a ligand contact to a beta-D-glucoside. N-linked (GlcNAc...) asparagine glycans are attached at residues asparagine 361 and asparagine 371. A beta-D-glucoside-binding positions include glutamate 417, tryptophan 466, glutamate 473–tryptophan 474, and tyrosine 482. Catalysis depends on glutamate 417, which acts as the Nucleophile. A glycan (N-linked (GlcNAc...) asparagine) is linked at asparagine 510.

Belongs to the glycosyl hydrolase 1 family.

The enzyme catalyses Hydrolysis of terminal, non-reducing beta-D-glucosyl residues with release of beta-D-glucose.. This is Beta-glucosidase 17 from Arabidopsis thaliana (Mouse-ear cress).